A 284-amino-acid chain; its full sequence is Ribosomal RNA small subunit methyltransferase A (284 aa).

Positions 26, 28, 53, 74, 97, and 127 each coordinate S-adenosyl-L-methionine.

Belongs to the class I-like SAM-binding methyltransferase superfamily. rRNA adenine N(6)-methyltransferase family. RsmA subfamily.

It is found in the cytoplasm. It catalyses the reaction adenosine(1518)/adenosine(1519) in 16S rRNA + 4 S-adenosyl-L-methionine = N(6)-dimethyladenosine(1518)/N(6)-dimethyladenosine(1519) in 16S rRNA + 4 S-adenosyl-L-homocysteine + 4 H(+). Specifically dimethylates two adjacent adenosines (A1518 and A1519) in the loop of a conserved hairpin near the 3'-end of 16S rRNA in the 30S particle. May play a critical role in biogenesis of 30S subunits. The polypeptide is Ribosomal RNA small subunit methyltransferase A (Anaeromyxobacter dehalogenans (strain 2CP-C)).